Here is a 280-residue protein sequence, read N- to C-terminus: Endochitinase A (280 aa).

The signal sequence occupies residues 1–25 (MANAPRILALGLLALLCAAAGPAAA). Residues 26 to 60 (QNCGCQPNFCCSKFGYCGTTDAYCGDGCQSGPCRS) form the Chitin-binding type-1 domain. 4 cysteine pairs are disulfide-bonded: C28/C36, C30/C42, C35/C49, and C53/C58. The tract at residues 61-77 (GGGGGGGGGGGGGGSGG) is hinge region (poly-Gly). A catalytic region spans residues 78 to 280 (ANVANVVTDA…RVDPGPNLTC (203 aa)). C100 and C149 are joined by a disulfide. The active-site Proton donor is E144. N155 carries an N-linked (GlcNAc...) asparagine glycan. Intrachain disulfides connect C161–C170 and C248–C280. N277 is a glycosylation site (N-linked (GlcNAc...) asparagine).

It belongs to the glycosyl hydrolase 19 family. Chitinase class IV subfamily.

The protein resides in the secreted. The enzyme catalyses Random endo-hydrolysis of N-acetyl-beta-D-glucosaminide (1-&gt;4)-beta-linkages in chitin and chitodextrins.. Its activity is regulated as follows. Inactivated by l-ethyl-3-(3-dimethylaminopropyl)carbodiimide (EDC) in the absence of exogenous nucleophiles (e.g. GlcNAc4, GlcNAc3 and GlcNAc2). Not inhibited by tetra-N-acetylchitopentaose or modified chitotetraose substrate TMG-chitotriomycin-pMP, containing a free, non-acetylated glucosaminyl residue or a N-trimethylamino glucosamine (TMG) residue at the non-reducing terminus, respectively. In terms of biological role, defense against chitin-containing fungal pathogens. Hydrolyzes glycol chitin and tetra-N-acetylchitotetraose in vitro. Its action is countered by fungal polyglycine hydrolases and fungalysin, that cleave the chitin-binding domain from the protein. In Zea mays (Maize), this protein is Endochitinase A.